The chain runs to 368 residues: Phosphoserine aminotransferase (368 aa).

Residue Arg-44 participates in L-glutamate binding. Residues 78 to 79 (AT), Trp-104, Thr-157, Asp-179, and Gln-202 contribute to the pyridoxal 5'-phosphate site. Lys-203 bears the N6-(pyridoxal phosphate)lysine mark. Residue 244–245 (NT) participates in pyridoxal 5'-phosphate binding.

This sequence belongs to the class-V pyridoxal-phosphate-dependent aminotransferase family. SerC subfamily. Homodimer. Requires pyridoxal 5'-phosphate as cofactor.

It localises to the cytoplasm. It carries out the reaction O-phospho-L-serine + 2-oxoglutarate = 3-phosphooxypyruvate + L-glutamate. The enzyme catalyses 4-(phosphooxy)-L-threonine + 2-oxoglutarate = (R)-3-hydroxy-2-oxo-4-phosphooxybutanoate + L-glutamate. It participates in amino-acid biosynthesis; L-serine biosynthesis; L-serine from 3-phospho-D-glycerate: step 2/3. The protein operates within cofactor biosynthesis; pyridoxine 5'-phosphate biosynthesis; pyridoxine 5'-phosphate from D-erythrose 4-phosphate: step 3/5. Functionally, catalyzes the reversible conversion of 3-phosphohydroxypyruvate to phosphoserine and of 3-hydroxy-2-oxo-4-phosphonooxybutanoate to phosphohydroxythreonine. In Neisseria meningitidis serogroup B (strain ATCC BAA-335 / MC58), this protein is Phosphoserine aminotransferase.